The chain runs to 229 residues: 2,3-bisphosphoglycerate-dependent phosphoglycerate mutase (229 aa).

Substrate contacts are provided by residues 7–14 (RHGQSEWN), 20–21 (TG), Arg59, 86–89 (ERHY), Lys97, 113–114 (RR), and 182–183 (GN). The Tele-phosphohistidine intermediate role is filled by His8. The active-site Proton donor/acceptor is the Glu86.

The protein belongs to the phosphoglycerate mutase family. BPG-dependent PGAM subfamily.

It catalyses the reaction (2R)-2-phosphoglycerate = (2R)-3-phosphoglycerate. It functions in the pathway carbohydrate degradation; glycolysis; pyruvate from D-glyceraldehyde 3-phosphate: step 3/5. In terms of biological role, catalyzes the interconversion of 2-phosphoglycerate and 3-phosphoglycerate. This chain is 2,3-bisphosphoglycerate-dependent phosphoglycerate mutase, found in Listeria welshimeri serovar 6b (strain ATCC 35897 / DSM 20650 / CCUG 15529 / CIP 8149 / NCTC 11857 / SLCC 5334 / V8).